A 1153-amino-acid chain; its full sequence is MYNPIGSAEAREPAELPAAVAAELERLEGRLRQLAGAEARRHLAVLGEAGAARVLRAVAESRRVRTLPGFIKYLAKREAAITRRDARGVPTALSAPAFISGPSREEESVYTQLFDNEVQMYDQSPSNEMATSLSNHGMVEVGSPNQQMPFHLHGNGGSVRQIARLVPQLAQLTVESPCGHTSSVSQNQGCIEVGTPTQAMVSPGLNQMALPCRCMPSGLQNYIEIDSPIQPMISTPRRVSTPSSVQDISRLIENMAGPSVSPPSPITAMPQNPTTTCHTTDNALREAASPQMLALEELGFRKIFMVFAYLASEKIENVLSVDYIRSLKFLSMAQFESQIWRTFGHKYIAASDRAKNLDSDPGMTKVYHCNVAIRGDTVVKIFKGPYIENTRTHLQKVVGDDNVLVVKFMGKLSDTKTDFSTYCEHYHKVAEDGIVLGLRRYRFFVYKDGGKEEKLKQEKIEDKNKCTSPVMCYFVRTESGWNMDEPYILSGRTVGQARELFMHISSAPTLAKYMARFALILSKTITWDADLSAVYVRRIKDEPCMDRHGNVVHKDQEPLIHTDGTGLVSVDLALNCPTSIFKGKFLKPQPLLMQFRLFYNGSAVKGTVLVDRRLPPATILIRPSMVKIETHPELSGVRSVNSSEIVSARNAKKSLSGVQSVNSFEIVSTSNRPRRTLTSRFLITLLCYGGVPEEYFLELLQSAIEGAENACYDYEDALRIAFSYADMEDSMSARMILSGIPLEESYLQHRLDFMAQQERKGIKQGKIPIDECYYLMDTTDPTGTLRPNEVCVILENGQFSGDVLVYKHPGLHFGDIHVLKATYIRDLEKEYVGYAKYAILFPISGPRSLADEMANSDFDGDIYWVSKNPKLLEHFKPSEPWVQAIKPKKTKQKKPQDCNESKLERLLFHEFLKTRFTPSFALGTAADSWLAYMDRLLTDSLDEIEKKLIEEKMLKLVDLYYLALDAPKTGNKVNIPSDLMVKQYPHFMGRSFSYHSSSILGQIYDKAEDVESLRSCNVQPIGVSLLPCFMEREAPPAARHLWQHRYEEYLTDSTMLYRAMVDKEERNMKFQELYEKYKHMLYDASEFEQTQRDPDDVFSEACVIYQIVYEKARWSNDASRCGFAWKVAGRALCHFYALKNEGDTALCSLPLLR.

Belongs to the RdRP family. Expressed in shoot apical meristem (SAM) and panicles.

It carries out the reaction RNA(n) + a ribonucleoside 5'-triphosphate = RNA(n+1) + diphosphate. Its function is as follows. Probably involved in the RNA silencing pathway and required for the generation of small interfering RNAs (siRNAs). In Oryza sativa subsp. japonica (Rice), this protein is Probable RNA-dependent RNA polymerase 3 (RDR3).